The following is a 323-amino-acid chain: MPLCTLRQMLGEARKHKYGVGAFNVNNMEQIQGIMKAVVQLKSPVILQCSRGALKYSDMIYLKKLCEAALEKHPDIPICIHLDHGDTLESVKMAIDLGFSSVMIDASHHPFDENVRITKEVVAYAHARGVSVEAELGTLGGIEEDVQNTVQLTEPQDAKKFVELTGVDALAVAIGTSHGAYKFKSESDIRLAIDRVKTISDLTGIPLVMHGSSSVPKDVKDMINKYGGKMPDAVGVPIESIVHAIGEGVCKINVDSDSRMAMTGAIRKVFVEHPEKFDPRDYLGPGRDAITEMLIPKIKAFGSAGHAGDYKVVSLEEAKAWYK.

Position 50 (Ser-50) interacts with beta-D-fructose 1,6-bisphosphate. Asp-83 acts as the Proton donor in catalysis. 2 residues coordinate Zn(2+): His-84 and His-178. The beta-D-fructose 1,6-bisphosphate site is built by His-178, Gly-179, and Lys-182. Zn(2+) is bound at residue His-210. Beta-D-fructose 1,6-bisphosphate is bound by residues Gly-211, Ser-213, Asn-253, Asp-255, Ser-256, Arg-259, and Arg-280.

It belongs to the class II fructose-bisphosphate aldolase family. As to quaternary structure, homodimer. Zn(2+) is required as a cofactor.

The enzyme catalyses beta-D-fructose 1,6-bisphosphate = D-glyceraldehyde 3-phosphate + dihydroxyacetone phosphate. It functions in the pathway carbohydrate degradation; glycolysis; D-glyceraldehyde 3-phosphate and glycerone phosphate from D-glucose: step 4/4. Its function is as follows. Plays a key role in glycolysis by catalyzing the cleavage of fructose 1,6-bisphosphate into dihydroxyacetone phosphate and glyceraldehyde 3-phosphate. Does not cleave D-tagatose-1,6-bisphosphate. This chain is Fructose-bisphosphate aldolase, found in Giardia intestinalis (strain ATCC 50803 / WB clone C6) (Giardia lamblia).